Consider the following 149-residue polypeptide: uncharacterized protein (149 aa).

The HotDog ACOT-type domain occupies Pro16–Asp128.

Belongs to the acyl coenzyme A hydrolase family.

This is an uncharacterized protein from Zymomonas mobilis subsp. mobilis (strain ATCC 31821 / ZM4 / CP4).